A 443-amino-acid chain; its full sequence is Cyclin-A2-1 (443 aa).

Residues 1–10 are compositionally biased toward basic residues; that stretch reads MHRASSKHTN. The disordered stretch occupies residues 1–61; sequence MHRASSKHTN…KRVARPSNKR (61 aa). Basic and acidic residues predominate over residues 11 to 25; that stretch reads AKKEAISTSKIRDNN.

It belongs to the cyclin family. Cyclin AB subfamily. Expressed in tissues with active cell division: apical root and shoot meristems, lateral root and leaf primordia, floral meristems and developing pollen.

Its function is as follows. May negatively regulate endocycles and act as a regulator of ploidy levels in endoreduplication. This chain is Cyclin-A2-1 (CYCA2-1), found in Arabidopsis thaliana (Mouse-ear cress).